Reading from the N-terminus, the 175-residue chain is MNYFQLFNIEVSFDVDLQQLSSSYQTLQKTVHPDKFAHASEQEQRIAVQKSAQINDAYQTLKNPLQRAEYILVQRSVEMPNEQHSFQDTSFLMRQMELREMLEDVRHSGDVDAALLEVQSVLSTEYLQLSQVMRTQISENNAASNSAACDNLRKLKFYQKLNIEVDRLEDSLFDD.

Positions 2-74 (NYFQLFNIEV…LQRAEYILVQ (73 aa)) constitute a J domain.

It belongs to the HscB family. As to quaternary structure, interacts with HscA and stimulates its ATPase activity.

In terms of biological role, co-chaperone involved in the maturation of iron-sulfur cluster-containing proteins. Seems to help targeting proteins to be folded toward HscA. In Colwellia psychrerythraea (strain 34H / ATCC BAA-681) (Vibrio psychroerythus), this protein is Co-chaperone protein HscB homolog.